The sequence spans 355 residues: Anthranilate phosphoribosyltransferase (355 aa).

5-phospho-alpha-D-ribose 1-diphosphate contacts are provided by residues Gly91, 94 to 95, Thr99, 101 to 104, 119 to 127, and Ala131; these read GD, NIST, and KHGNRAMSS. Gly91 serves as a coordination point for anthranilate. Ser103 contributes to the Mg(2+) binding site. Residue Asn122 coordinates anthranilate. Position 177 (Arg177) interacts with anthranilate. The Mg(2+) site is built by Asp234 and Glu235.

Belongs to the anthranilate phosphoribosyltransferase family. Homodimer. Mg(2+) serves as cofactor.

It carries out the reaction N-(5-phospho-beta-D-ribosyl)anthranilate + diphosphate = 5-phospho-alpha-D-ribose 1-diphosphate + anthranilate. The protein operates within amino-acid biosynthesis; L-tryptophan biosynthesis; L-tryptophan from chorismate: step 2/5. Its function is as follows. Participates in the tryptophan-dependent indole-3-acetic acid production, which is a phytohormone released by A.brasilense. Catalyzes the transfer of the phosphoribosyl group of 5-phosphorylribose-1-pyrophosphate (PRPP) to anthranilate to yield N-(5'-phosphoribosyl)-anthranilate (PRA). In Azospirillum brasilense, this protein is Anthranilate phosphoribosyltransferase.